Consider the following 372-residue polypeptide: MSNKDIRVVVGMSGGVDSSVTAHVLKEQGYDVIGIFMKNWDDTDENGVCTATEDYNDVIEVCNQIGIPYYAVNFEKEYWDKVFTYFLDEYKKGRTPNPDVMCNKEIKFKAFLDHAMNLGADYVATGHYARIHRHEDGHVEMLRGVDNNKDQTYFLNQLSQQQLSKVMFPIGDIEKSEVRRIAEEQGLVTAKKKDSTGICFIGEKNFKTFLSQYLPAQPGDMITLDGKKMGKHSGLMYYTIGQRHGLGIGGDGDPWFVVGKNLKDNVLYVEQGFHHDALYSDYLIASDYSFVNPEDNDLDQGFECTAKFRYRQKDTKVFVKRENDHALRVTFAEPVRAITPGQAVVFYQGDVCLGGATIDDVFKNEGQLNFVV.

Residues G11–S18 and M37 contribute to the ATP site. The interaction with target base in tRNA stretch occupies residues N97–D99. The active-site Nucleophile is the C102. An intrachain disulfide couples C102 to C199. An ATP-binding site is contributed by G126. The interval K149–Q151 is interaction with tRNA. C199 serves as the catalytic Cysteine persulfide intermediate. The interaction with tRNA stretch occupies residues R309–Y310.

Belongs to the MnmA/TRMU family.

The protein resides in the cytoplasm. It carries out the reaction S-sulfanyl-L-cysteinyl-[protein] + uridine(34) in tRNA + AH2 + ATP = 2-thiouridine(34) in tRNA + L-cysteinyl-[protein] + A + AMP + diphosphate + H(+). Its function is as follows. Catalyzes the 2-thiolation of uridine at the wobble position (U34) of tRNA, leading to the formation of s(2)U34. In Staphylococcus aureus (strain Mu50 / ATCC 700699), this protein is tRNA-specific 2-thiouridylase MnmA.